A 414-amino-acid polypeptide reads, in one-letter code: Serine hydroxymethyltransferase (414 aa).

(6S)-5,6,7,8-tetrahydrofolate-binding positions include Leu117 and 121–123 (GHL). Lys226 is modified (N6-(pyridoxal phosphate)lysine). Residues Glu241 and 349-351 (TPF) contribute to the (6S)-5,6,7,8-tetrahydrofolate site.

The protein belongs to the SHMT family. In terms of assembly, homodimer. Requires pyridoxal 5'-phosphate as cofactor.

It localises to the cytoplasm. The catalysed reaction is (6R)-5,10-methylene-5,6,7,8-tetrahydrofolate + glycine + H2O = (6S)-5,6,7,8-tetrahydrofolate + L-serine. Its pathway is one-carbon metabolism; tetrahydrofolate interconversion. It participates in amino-acid biosynthesis; glycine biosynthesis; glycine from L-serine: step 1/1. Functionally, catalyzes the reversible interconversion of serine and glycine with tetrahydrofolate (THF) serving as the one-carbon carrier. Also exhibits THF-independent aldolase activity toward beta-hydroxyamino acids, producing glycine and aldehydes, via a retro-aldol mechanism. The chain is Serine hydroxymethyltransferase from Methanothrix thermoacetophila (strain DSM 6194 / JCM 14653 / NBRC 101360 / PT) (Methanosaeta thermophila).